The following is a 193-amino-acid chain: Peptidyl-tRNA hydrolase (193 aa).

Tyr-17 is a binding site for tRNA. Residue His-22 is the Proton acceptor of the active site. TRNA-binding residues include Phe-68, Asn-70, and Asn-115.

The protein belongs to the PTH family. Monomer.

It is found in the cytoplasm. It catalyses the reaction an N-acyl-L-alpha-aminoacyl-tRNA + H2O = an N-acyl-L-amino acid + a tRNA + H(+). Hydrolyzes ribosome-free peptidyl-tRNAs (with 1 or more amino acids incorporated), which drop off the ribosome during protein synthesis, or as a result of ribosome stalling. In terms of biological role, catalyzes the release of premature peptidyl moieties from peptidyl-tRNA molecules trapped in stalled 50S ribosomal subunits, and thus maintains levels of free tRNAs and 50S ribosomes. This chain is Peptidyl-tRNA hydrolase, found in Alteromonas mediterranea (strain DSM 17117 / CIP 110805 / LMG 28347 / Deep ecotype).